The chain runs to 88 residues: UPF0223 protein YktA (88 aa).

It belongs to the UPF0223 family.

The chain is UPF0223 protein YktA (yktA) from Bacillus subtilis (strain 168).